Here is a 938-residue protein sequence, read N- to C-terminus: Glutamate receptor 3.1 (938 aa).

The first 20 residues, 1 to 20 (MKFIFYLFSIFCCLCSCAQS), serve as a signal peptide directing secretion. The Extracellular portion of the chain corresponds to 21–588 (QNISGRPDAV…GGWAFLQPFT (568 aa)). N22, N39, N59, N340, N418, N436, and N551 each carry an N-linked (GlcNAc...) asparagine glycan. Residues 589 to 609 (IKMWTVTGLFFLIIGTVVWML) traverse the membrane as a helical segment. The Cytoplasmic segment spans residues 610–618 (EHRINDEFR). Residues 619-639 (GPPAKQLITVFWFSFSTLFFA) traverse the membrane as a helical segment. Over 640 to 650 (HREDTRSTLGR) the chain is Cytoplasmic. A helical membrane pass occupies residues 651–671 (FVIIIWLFVVLIIQSSYTASL). At 672–830 (TSILTVQQLT…ELDQDPDRLD (159 aa)) the chain is on the extracellular side. The helical transmembrane segment at 831–851 (VYSFSALFLICGLACIFALAI) threads the bilayer. Over 852–938 (HACNLFYQYS…SGSGSTTASC (87 aa)) the chain is Cytoplasmic. The interval 906 to 938 (AAKEKASGLGGSGGSMSGVSFTSSGSGSTTASC) is disordered. Over residues 922 to 938 (SGVSFTSSGSGSTTASC) the composition is skewed to low complexity.

This sequence belongs to the glutamate-gated ion channel (TC 1.A.10.1) family. May form homomultimers. In terms of tissue distribution, expressed at low levels in roots and leaves.

The protein localises to the membrane. Functionally, glutamate-gated receptor that probably acts as a non-selective cation channel. Involved in root development. May regulate cell proliferation and cell death in the root apex. The sequence is that of Glutamate receptor 3.1 (GLR3.1) from Oryza sativa subsp. japonica (Rice).